We begin with the raw amino-acid sequence, 185 residues long: ATP-dependent protease subunit HslV (185 aa).

Thr12 is a catalytic residue. Na(+) contacts are provided by Ala168, Cys171, and Thr174.

This sequence belongs to the peptidase T1B family. HslV subfamily. In terms of assembly, a double ring-shaped homohexamer of HslV is capped on each side by a ring-shaped HslU homohexamer. The assembly of the HslU/HslV complex is dependent on binding of ATP.

The protein localises to the cytoplasm. The catalysed reaction is ATP-dependent cleavage of peptide bonds with broad specificity.. With respect to regulation, allosterically activated by HslU binding. Protease subunit of a proteasome-like degradation complex believed to be a general protein degrading machinery. In Cereibacter sphaeroides (strain ATCC 17025 / ATH 2.4.3) (Rhodobacter sphaeroides), this protein is ATP-dependent protease subunit HslV.